A 243-amino-acid chain; its full sequence is DNA polymerase III subunit epsilon (243 aa).

2 residues coordinate a divalent metal cation: Asp12 and Glu14. Substrate-binding residues include Asp12, Glu14, Glu61, and His66. His162 acts as the Proton acceptor in catalysis. Asp167 contributes to the a divalent metal cation binding site. Asp167 contacts substrate.

In a ternary complex this subunit contacts both the beta sliding clamp (dnaN) and the polymerase subunit (dnaE). The DNA polymerase III holoenzyme complex contains at least 10 different subunits organized into 3 functionally essential subassemblies: the Pol III core, the beta sliding clamp processivity factor and the clamp-loading complex. The Pol III core (subunits alpha, epsilon and theta) contains the polymerase and the 3'-5' exonuclease proofreading activities. The polymerase is tethered to the template via the dimeric beta sliding clamp processivity factor. The clamp loader (also called gamma complex) assembles the beta sliding clamp onto the primed template and plays a central role in the organization and communication at the replication fork. The clamp-loading complex contains delta, delta', psi and chi, and 3 copies of either or both of two different DnaX proteins, gamma and tau. The DNA replisome complex has a single clamp loader (3 tau and 1 each of delta, delta', psi and chi subunits) which binds 3 Pol III cores (1 core on the leading strand and 2 on the lagging strand) each with a beta sliding clamp dimer. Additional proteins in the replisome are other copies of gamma, psi and chi, Ssb, DNA helicase and RNA primase. Requires Mg(2+) as cofactor. The cofactor is Mn(2+).

It catalyses the reaction DNA(n) + a 2'-deoxyribonucleoside 5'-triphosphate = DNA(n+1) + diphosphate. Functionally, DNA polymerase III is a complex, multichain enzyme responsible for most of the replicative synthesis in bacteria. The epsilon subunit contain the editing function and is a proofreading 3'-5' exonuclease. Contacts both the beta sliding clamp (dnaN) and the polymerase subunit (dnaE), stabilizing their interaction. This chain is DNA polymerase III subunit epsilon (dnaQ), found in Escherichia coli (strain K12).